A 118-amino-acid chain; its full sequence is Large ribosomal subunit protein bL19 (118 aa).

The protein belongs to the bacterial ribosomal protein bL19 family.

Its function is as follows. This protein is located at the 30S-50S ribosomal subunit interface and may play a role in the structure and function of the aminoacyl-tRNA binding site. This Teredinibacter turnerae (strain ATCC 39867 / T7901) protein is Large ribosomal subunit protein bL19.